The chain runs to 302 residues: Methionyl-tRNA formyltransferase (302 aa).

108–111 contributes to the (6S)-5,6,7,8-tetrahydrofolate binding site; the sequence is SLLP.

Belongs to the Fmt family.

It carries out the reaction L-methionyl-tRNA(fMet) + (6R)-10-formyltetrahydrofolate = N-formyl-L-methionyl-tRNA(fMet) + (6S)-5,6,7,8-tetrahydrofolate + H(+). Attaches a formyl group to the free amino group of methionyl-tRNA(fMet). The formyl group appears to play a dual role in the initiator identity of N-formylmethionyl-tRNA by promoting its recognition by IF2 and preventing the misappropriation of this tRNA by the elongation apparatus. The chain is Methionyl-tRNA formyltransferase from Nitratiruptor sp. (strain SB155-2).